We begin with the raw amino-acid sequence, 469 residues long: Putative pyridoxal-dependent decarboxylase domain-containing protein 2 (469 aa).

The stretch at 12-40 forms a coiled coil; sequence TLAEMGKNLKEAVKMLEDSQRRTEEENGK. Positions 28–44 are enriched in basic and acidic residues; it reads EDSQRRTEEENGKKLIS. The interval 28-47 is disordered; it reads EDSQRRTEEENGKKLISRDI.

The protein belongs to the group II decarboxylase family. Requires pyridoxal 5'-phosphate as cofactor.

The polypeptide is Putative pyridoxal-dependent decarboxylase domain-containing protein 2 (PDXDC2P) (Homo sapiens (Human)).